Consider the following 1064-residue polypeptide: WD repeat-containing protein on Y chromosome (1064 aa).

WD repeat units lie at residues 153–197 (EEVT…IRTA), 326–365 (RVPL…EPSA), 369–408 (GHNG…LLQT), 459–498 (THAA…RKII), 511–550 (IIDI…VVRN), 598–638 (FHTD…RRYS), 746–785 (KTGD…EAEK), and 827–866 (AHLK…LGTL). Residues 914–924 (PAKRAEVKAPE) show a composition bias toward basic and acidic residues. Disordered regions lie at residues 914-935 (PAKR…QTDD) and 1023-1064 (GSAL…QQSE). A compositionally biased stretch (acidic residues) spans 925-935 (DRDEETAQTDD).

In Drosophila pseudoobscura pseudoobscura (Fruit fly), this protein is WD repeat-containing protein on Y chromosome.